The chain runs to 425 residues: Histidine--tRNA ligase (425 aa).

This sequence belongs to the class-II aminoacyl-tRNA synthetase family. Homodimer.

The protein resides in the cytoplasm. The enzyme catalyses tRNA(His) + L-histidine + ATP = L-histidyl-tRNA(His) + AMP + diphosphate + H(+). This chain is Histidine--tRNA ligase, found in Streptococcus uberis (strain ATCC BAA-854 / 0140J).